Reading from the N-terminus, the 428-residue chain is Lysophosphatidic acid phosphatase type 6 (428 aa).

The N-terminal 32 residues, 1–32 (MITGVFSMRLWTPVGVLTSLAYCLHQRRVALA), are a transit peptide targeting the mitochondrion. Residues 58-168 (RHGARSPLKP…VFIRSTNIFR (111 aa)) form a substrate binding region. Residue His59 is the Nucleophile of the active site. The active-site Proton donor is the Asp335.

Belongs to the histidine acid phosphatase family. Monomer. In terms of tissue distribution, highly expressed in kidney, heart, small intestine, muscle, liver, prostate, testis, ovary and weakly expressed in thymus and colon.

It is found in the mitochondrion. It carries out the reaction a phosphate monoester + H2O = an alcohol + phosphate. The catalysed reaction is 1-(9Z-octadecenoyl)-sn-glycero-3-phosphate + H2O = 1-(9Z-octadecenoyl)-sn-glycerol + phosphate. Hydrolyzes lysophosphatidic acid (LPA) containing a medium length fatty acid chain to the corresponding monoacylglycerol. Has highest activity with lysophosphatidic acid containing myristate (C14:0), monounsaturated oleate (C18:1) or palmitate (C16:0), and lower activity with C18:0 and C6:0 lysophosphatidic acid. The chain is Lysophosphatidic acid phosphatase type 6 (ACP6) from Homo sapiens (Human).